An 87-amino-acid polypeptide reads, in one-letter code: Small ribosomal subunit protein bS16 (87 aa).

This sequence belongs to the bacterial ribosomal protein bS16 family.

This Buchnera aphidicola subsp. Baizongia pistaciae (strain Bp) protein is Small ribosomal subunit protein bS16.